The chain runs to 121 residues: Non-specific lipid-transfer protein 9 (121 aa).

The first 27 residues, 1-27, serve as a signal peptide directing secretion; the sequence is MRKSISIAFVIAITIFMSHLNVFTVYS. Intrachain disulfides connect Cys-31–Cys-80, Cys-41–Cys-57, Cys-58–Cys-102, and Cys-78–Cys-116.

Belongs to the plant LTP family.

Its function is as follows. Plant non-specific lipid-transfer proteins transfer phospholipids as well as galactolipids across membranes. May play a role in wax or cutin deposition in the cell walls of expanding epidermal cells and certain secretory tissues. The polypeptide is Non-specific lipid-transfer protein 9 (LTP9) (Arabidopsis thaliana (Mouse-ear cress)).